The chain runs to 556 residues: MKTDVQIAQEAQMKPITEVANYLGIQDDELELYGKYKAKVSLDVLERQKDKEDAKLVLVTAINPTPAGEGKTTTNVGLSMGLNKIGKRTITALREPSLGPCFGVKGGAAGGGYAQVVPMDDINLHFTGDFHAITSAHNLLAALLDNHLHQGNALNINPKKIVWKRVIDMNDRSLRNVIIGLGGNGDGFVRQAQFDITVASEIMAILCLATSMSDLKERLSKMIVAYAKDGSAVTAGQLEATGAMALLLKDAVKPNLVQTLENTPAFIHGGPFANIAHGCNSVLATKVALKLADYVVTEGGFGADLGAEKFFDIKSRFAGLKPNCDVSVATVRALKMNGGVPKTELAAENVEAVKKGVANLERHIENVAKFGVPAVVAINKFPLDTEAELKAVEDACNAKGADVVLSDVWANGGEGGVEMAKKVVEICEKNEANFAPLYDVNLSIPEKIEKIATTIYRADGVDFTSDCKKQIAELEKLGLDKMPICMAKTQYSFSDDPTLLGAPTGFRITVREVRVSAGAGFIVALTGNMMTMPGLPKVPAANGMDILESGEIIGLS.

65–72 (TPAGEGKT) contacts ATP.

The protein belongs to the formate--tetrahydrofolate ligase family.

The enzyme catalyses (6S)-5,6,7,8-tetrahydrofolate + formate + ATP = (6R)-10-formyltetrahydrofolate + ADP + phosphate. It functions in the pathway one-carbon metabolism; tetrahydrofolate interconversion. This chain is Formate--tetrahydrofolate ligase, found in Clostridium cylindrosporum.